The primary structure comprises 214 residues: tRNA (guanine-N(7)-)-methyltransferase (214 aa).

S-adenosyl-L-methionine-binding residues include glutamate 44, glutamate 69, aspartate 96, and aspartate 118. Aspartate 118 is a catalytic residue. Residues lysine 122, aspartate 154, and 191-194 (TEYE) each bind substrate.

The protein belongs to the class I-like SAM-binding methyltransferase superfamily. TrmB family.

It catalyses the reaction guanosine(46) in tRNA + S-adenosyl-L-methionine = N(7)-methylguanosine(46) in tRNA + S-adenosyl-L-homocysteine. The protein operates within tRNA modification; N(7)-methylguanine-tRNA biosynthesis. Functionally, catalyzes the formation of N(7)-methylguanine at position 46 (m7G46) in tRNA. The chain is tRNA (guanine-N(7)-)-methyltransferase from Listeria welshimeri serovar 6b (strain ATCC 35897 / DSM 20650 / CCUG 15529 / CIP 8149 / NCTC 11857 / SLCC 5334 / V8).